The chain runs to 201 residues: ATP-dependent Clp protease proteolytic subunit 2 (201 aa).

Residue serine 101 is the Nucleophile of the active site. The active site involves histidine 126.

This sequence belongs to the peptidase S14 family. In terms of assembly, fourteen ClpP subunits assemble into 2 heptameric rings which stack back to back to give a disk-like structure with a central cavity, resembling the structure of eukaryotic proteasomes.

Its subcellular location is the cytoplasm. It catalyses the reaction Hydrolysis of proteins to small peptides in the presence of ATP and magnesium. alpha-casein is the usual test substrate. In the absence of ATP, only oligopeptides shorter than five residues are hydrolyzed (such as succinyl-Leu-Tyr-|-NHMec, and Leu-Tyr-Leu-|-Tyr-Trp, in which cleavage of the -Tyr-|-Leu- and -Tyr-|-Trp bonds also occurs).. Functionally, cleaves peptides in various proteins in a process that requires ATP hydrolysis. Has a chymotrypsin-like activity. Plays a major role in the degradation of misfolded proteins. The polypeptide is ATP-dependent Clp protease proteolytic subunit 2 (Prochlorococcus marinus subsp. pastoris (strain CCMP1986 / NIES-2087 / MED4)).